The chain runs to 103 residues: L-rhamnose-binding lectin ELEL-1 (103 aa).

Positions 13–102 (VCEGSSLTIS…KYLELSYDCS (90 aa)) constitute an SUEL-type lectin domain. 4 cysteine pairs are disulfide-bonded: C14-C45, C23-C101, C56-C88, and C69-C75.

As to quaternary structure, homodimer; disulfide-linked. In terms of processing, not glycosylated.

Rhamnose-binding lectin. Also binds alpha-D-melibiose, alpha-D-lactose, beta-D-lactose, methyl-alpha-D-galactopyranoside, methyl-beta-D--galactopyranoside and D-galactose but not D-arabinose, L-fucose, D-glucose, D-mannose, D-maltose, D-sucrose, N-acetyl-D-galactosamine, N-acetyl-D-glucosamine, N-acetyl-D-mannosamine-D-xylose or by glycoproteins orosomucoid, thyroglobulin, ovomucoid and porcine stomach mucin. Shows cation-independent hemagglutinating activity against rabbit and human erythrocytes. Agglutinates cells of Gram-positive bacterial species S.aureus but not those of Gram-negative E.coli. This is L-rhamnose-binding lectin ELEL-1 from Echinometra lucunter (Rock-boring urchin).